We begin with the raw amino-acid sequence, 155 residues long: Endoribonuclease YbeY (155 aa).

His114, His118, and His124 together coordinate Zn(2+).

The protein belongs to the endoribonuclease YbeY family. Zn(2+) serves as cofactor.

It is found in the cytoplasm. Single strand-specific metallo-endoribonuclease involved in late-stage 70S ribosome quality control and in maturation of the 3' terminus of the 16S rRNA. In Tolumonas auensis (strain DSM 9187 / NBRC 110442 / TA 4), this protein is Endoribonuclease YbeY.